The following is a 109-amino-acid chain: Nucleoid-associated protein BUsg_467 (109 aa).

Belongs to the YbaB/EbfC family. In terms of assembly, homodimer.

Its subcellular location is the cytoplasm. The protein resides in the nucleoid. Binds to DNA and alters its conformation. May be involved in regulation of gene expression, nucleoid organization and DNA protection. This Buchnera aphidicola subsp. Schizaphis graminum (strain Sg) protein is Nucleoid-associated protein BUsg_467.